The following is a 1227-amino-acid chain: Pre-mRNA-splicing factor ATP-dependent RNA helicase PRP16 (1227 aa).

Gly2 bears the N-acetylglycine mark. Residue Ser56 is modified to Phosphoserine. The span at 60-89 (REREEKDDGEDKKKSKVSSYKDWEESKDDQ) shows a compositional bias: basic and acidic residues. A disordered region spans residues 60–320 (REREEKDDGE…ERQQWEDDQR (261 aa)). Thr117 carries the phosphothreonine modification. Basic and acidic residues predominate over residues 128–201 (FWERSRQRER…SRRNEPESPR (74 aa)). Phosphoserine is present on residues Ser199 and Ser224. Over residues 222-239 (YGSSRRSQWESPSPTPSY) the composition is skewed to polar residues. The segment covering 240–263 (RDSERSHRLSTRDRDRSVRGKYSD) has biased composition (basic and acidic residues). An N6-acetyllysine modification is found at Lys260. The span at 300–310 (GEEGISFDTEE) shows a compositional bias: acidic residues. The segment covering 311–320 (ERQQWEDDQR) has biased composition (basic and acidic residues). Residues Lys482, Lys483, and Lys504 each participate in a glycyl lysine isopeptide (Lys-Gly) (interchain with G-Cter in SUMO2) cross-link. The Helicase ATP-binding domain maps to 542-705 (LTIIRDNSIV…FGNVPIFHIP (164 aa)). 555-562 (GETGSGKT) contacts ATP. The DEAH box signature appears at 652–655 (DEAH). The region spanning 727-902 (AVKQSLQVHL…NVVLLLKSLG (176 aa)) is the Helicase C-terminal domain. Positions 1155-1227 (GKSRQENRRR…PRRTPARFGL (73 aa)) are disordered. 2 stretches are compositionally biased toward basic and acidic residues: residues 1157–1169 (SRQE…KEEA) and 1181–1194 (EQLR…EKRS). Lys1166 participates in a covalent cross-link: Glycyl lysine isopeptide (Lys-Gly) (interchain with G-Cter in SUMO2). Ser1194 carries the phosphoserine modification.

Belongs to the DEAD box helicase family. DEAH subfamily. PRP16 sub-subfamily. In terms of assembly, identified in the spliceosome C complex.

The protein localises to the nucleus. The enzyme catalyses ATP + H2O = ADP + phosphate + H(+). In terms of biological role, probable ATP-binding RNA helicase. Involved in pre-mRNA splicing as component of the spliceosome. In Homo sapiens (Human), this protein is Pre-mRNA-splicing factor ATP-dependent RNA helicase PRP16 (DHX38).